The primary structure comprises 299 residues: Dihydroorotate dehydrogenase B (NAD(+)), catalytic subunit (299 aa).

FMN-binding positions include serine 19 and 43–44 (KS). Residues lysine 43, 67 to 71 (NAMGL), and asparagine 121 contribute to the substrate site. Residue asparagine 121 participates in FMN binding. Residue cysteine 124 is the Nucleophile of the active site. The FMN site is built by lysine 159 and isoleucine 185. 186–187 (NT) serves as a coordination point for substrate. FMN is bound by residues glycine 211, 237–238 (GG), and 259–260 (GT).

Belongs to the dihydroorotate dehydrogenase family. Type 1 subfamily. As to quaternary structure, heterotetramer of 2 PyrK and 2 PyrD type B subunits. The cofactor is FMN.

Its subcellular location is the cytoplasm. It catalyses the reaction (S)-dihydroorotate + NAD(+) = orotate + NADH + H(+). It functions in the pathway pyrimidine metabolism; UMP biosynthesis via de novo pathway; orotate from (S)-dihydroorotate (NAD(+) route): step 1/1. Catalyzes the conversion of dihydroorotate to orotate with NAD(+) as electron acceptor. This Pyrococcus abyssi (strain GE5 / Orsay) protein is Dihydroorotate dehydrogenase B (NAD(+)), catalytic subunit (pyrD).